We begin with the raw amino-acid sequence, 131 residues long: Peptidyl-prolyl cis-trans isomerase NIMA-interacting 4 (131 aa).

The interval 1 to 25 (MPPKGKSGSGKGGKGKAASGSESSE) is necessary for nuclear localization and DNA-binding. The tract at residues 1-37 (MPPKGKSGSGKGGKGKAASGSESSEKKAQGPKGGGNA) is disordered. The interval 1–41 (MPPKGKSGSGKGGKGKAASGSESSEKKAQGPKGGGNAVKVR) is necessary for association with the pre-rRNP complexes. Ser-19 carries the phosphoserine; by CK2 modification. The region spanning 35–129 (GNAVKVRHIL…FGYHIIMVEG (95 aa)) is the PpiC domain.

The protein belongs to the PpiC/parvulin rotamase family. PIN4 subfamily. In terms of assembly, found in pre-ribosomal ribonucleoprotein (pre-rRNP) complexes. Post-translationally, phosphorylated. Phosphorylation occurs both in the nucleus and the cytoplasm. Phosphorylation at Ser-19 does not affect its PPIase activity but is required for nuclear localization, and the dephosphorylation is a prerequisite for the binding to DNA. The unphosphorylated form associates with the pre-rRNP complexes in the nucleus.

It is found in the nucleus. Its subcellular location is the nucleolus. It localises to the cytoplasm. The protein resides in the cytoskeleton. The protein localises to the spindle. It carries out the reaction [protein]-peptidylproline (omega=180) = [protein]-peptidylproline (omega=0). Functionally, involved as a ribosomal RNA processing factor in ribosome biogenesis. Binds to tightly bent AT-rich stretches of double-stranded DNA. This Bos taurus (Bovine) protein is Peptidyl-prolyl cis-trans isomerase NIMA-interacting 4 (PIN4).